We begin with the raw amino-acid sequence, 608 residues long: UvrABC system protein C (608 aa).

A GIY-YIG domain is found at 18-96 (NQPGVYRMYN…IKKYKPRYNV (79 aa)). The 36-residue stretch at 206–241 (KQVIDSLVQHMERASTDLRFEAAARYRDQISALNKV) folds into the UVR domain.

Belongs to the UvrC family. As to quaternary structure, interacts with UvrB in an incision complex.

It localises to the cytoplasm. Its function is as follows. The UvrABC repair system catalyzes the recognition and processing of DNA lesions. UvrC both incises the 5' and 3' sides of the lesion. The N-terminal half is responsible for the 3' incision and the C-terminal half is responsible for the 5' incision. The polypeptide is UvrABC system protein C (Pseudoalteromonas atlantica (strain T6c / ATCC BAA-1087)).